Here is a 762-residue protein sequence, read N- to C-terminus: 5-methyltetrahydropteroyltriglutamate--homocysteine methyltransferase (762 aa).

5-methyltetrahydropteroyltri-L-glutamate-binding positions include 17–20 (REWK) and K111. Residues 435 to 437 (IGS) and E488 contribute to the L-homocysteine site. L-methionine is bound by residues 435 to 437 (IGS) and E488. 5-methyltetrahydropteroyltri-L-glutamate is bound by residues 519–520 (RC) and W565. D603 contributes to the L-homocysteine binding site. Position 603 (D603) interacts with L-methionine. E609 is a binding site for 5-methyltetrahydropteroyltri-L-glutamate. Positions 645, 647, and 669 each coordinate Zn(2+). The active-site Proton donor is the H698. Residue C730 coordinates Zn(2+).

Belongs to the vitamin-B12 independent methionine synthase family. Zn(2+) serves as cofactor.

It carries out the reaction 5-methyltetrahydropteroyltri-L-glutamate + L-homocysteine = tetrahydropteroyltri-L-glutamate + L-methionine. It participates in amino-acid biosynthesis; L-methionine biosynthesis via de novo pathway; L-methionine from L-homocysteine (MetE route): step 1/1. Functionally, catalyzes the transfer of a methyl group from 5-methyltetrahydrofolate to homocysteine resulting in methionine formation. The chain is 5-methyltetrahydropteroyltriglutamate--homocysteine methyltransferase from Bacillus thuringiensis subsp. konkukian (strain 97-27).